An 85-amino-acid polypeptide reads, in one-letter code: Small ribosomal subunit protein uS17 (85 aa).

Belongs to the universal ribosomal protein uS17 family. As to quaternary structure, part of the 30S ribosomal subunit.

In terms of biological role, one of the primary rRNA binding proteins, it binds specifically to the 5'-end of 16S ribosomal RNA. This chain is Small ribosomal subunit protein uS17, found in Haemophilus influenzae (strain 86-028NP).